We begin with the raw amino-acid sequence, 339 residues long: RxLR effector protein SFI4 (339 aa).

Residues 1 to 24 (MRVLRVTFLWALLLLVAFSASVYA) form the signal peptide. A RxLR-dEER motif is present at residues 51-74 (RGLRNSGMKLNDAKDFKGAIAKLR). TPR repeat units lie at residues 106-139 (AQILNDYGTVLIRAKQYDEAIEVLEDSVAMVEKI), 190-223 (IEASLRIAEGYKKLGNTKKNLKVLKDAVEAQNGE), 232-265 (AELYMELSTAHVAVGEIDDALRAAEVASAIFRQR), and 274-307 (AFSLNALAGVKMRQKKVDEAIKLLEQAHRIAVQI).

Belongs to the RxLR effector family.

It is found in the secreted. The protein resides in the host nucleus. Its subcellular location is the host cytoplasm. Effector that suppresses flg22-induced post-translational MAP kinase activation in tomato but not in Arabidopsis. The perception of highly conserved pathogen- or microbe-associated molecular patterns (PAMPs/MAMPs), such as flg22, triggers converging signaling pathways recruiting MAP kinase cascades and inducing transcriptional re-programming, yielding a generic antimicrobial response. The sequence is that of RxLR effector protein SFI4 from Phytophthora infestans (strain T30-4) (Potato late blight agent).